Consider the following 509-residue polypeptide: Cobyric acid synthase (509 aa).

The GATase cobBQ-type domain maps to 262–459 (ELKVGIIKLP…IHGIFENDDW (198 aa)). Cys-343 functions as the Nucleophile in the catalytic mechanism. His-451 is an active-site residue.

It belongs to the CobB/CobQ family. CobQ subfamily.

It functions in the pathway cofactor biosynthesis; adenosylcobalamin biosynthesis. Catalyzes amidations at positions B, D, E, and G on adenosylcobyrinic A,C-diamide. NH(2) groups are provided by glutamine, and one molecule of ATP is hydrogenolyzed for each amidation. The sequence is that of Cobyric acid synthase from Prochlorococcus marinus subsp. pastoris (strain CCMP1986 / NIES-2087 / MED4).